The following is a 353-amino-acid chain: Polyadenylate-binding protein-interacting protein 10 (353 aa).

Positions 1–61 (MAVAENAGVK…IDSTPETDDR (61 aa)) are disordered. The span at 20–31 (NNNTAASATETT) shows a compositional bias: low complexity. The short motif at 96–106 (KLNPMAQEFVP) is the PAM2-like element. Positions 128-159 (AAPPKLADGNDHFPRRRRSFGQGKRRMNKRTS) are disordered. Basic residues predominate over residues 141–156 (PRRRRSFGQGKRRMNK). Positions 142–153 (RRRRSFGQGKRR) match the Bipartite nuclear localization signal motif. RRM domains lie at 169 to 244 (RTVY…PSKT) and 266 to 341 (RTVY…PSKT).

In terms of tissue distribution, expressed in cauline leaves, stems, rosette leaves, immature siliques and primary inflorescences.

It is found in the nucleus. The sequence is that of Polyadenylate-binding protein-interacting protein 10 (CID10) from Arabidopsis thaliana (Mouse-ear cress).